Reading from the N-terminus, the 217-residue chain is GTP cyclohydrolase-2 (217 aa).

GTP is bound at residue 50 to 54 (RIHSE). Zn(2+) is bound by residues cysteine 55, cysteine 66, and cysteine 68. GTP contacts are provided by residues glutamine 71, 93–95 (EGR), and threonine 115. Aspartate 127 acts as the Proton acceptor in catalysis. Arginine 129 functions as the Nucleophile in the catalytic mechanism. The GTP site is built by threonine 150 and lysine 155.

The protein belongs to the GTP cyclohydrolase II family. Requires Zn(2+) as cofactor.

The catalysed reaction is GTP + 4 H2O = 2,5-diamino-6-hydroxy-4-(5-phosphoribosylamino)-pyrimidine + formate + 2 phosphate + 3 H(+). It functions in the pathway cofactor biosynthesis; riboflavin biosynthesis; 5-amino-6-(D-ribitylamino)uracil from GTP: step 1/4. Functionally, catalyzes the conversion of GTP to 2,5-diamino-6-ribosylamino-4(3H)-pyrimidinone 5'-phosphate (DARP), formate and pyrophosphate. This Actinobacillus succinogenes (strain ATCC 55618 / DSM 22257 / CCUG 43843 / 130Z) protein is GTP cyclohydrolase-2.